Reading from the N-terminus, the 271-residue chain is Protein MGF 360-15R (271 aa).

Belongs to the asfivirus MGF 360 family.

Functionally, plays a role in virus cell tropism, and may be required for efficient virus replication in macrophages. The polypeptide is Protein MGF 360-15R (African swine fever virus (isolate Tick/Malawi/Lil 20-1/1983) (ASFV)).